A 288-amino-acid chain; its full sequence is N-acetylneuraminate lyase (288 aa).

Residues serine 44 and threonine 45 each coordinate aceneuramate. The active-site Proton donor is tyrosine 133. The active-site Schiff-base intermediate with substrate is the lysine 161. Aceneuramate contacts are provided by threonine 163, glycine 185, aspartate 187, glutamate 188, and serine 204.

The protein belongs to the DapA family. NanA subfamily. As to quaternary structure, homotetramer.

Its subcellular location is the cytoplasm. It carries out the reaction aceneuramate = aldehydo-N-acetyl-D-mannosamine + pyruvate. Its pathway is amino-sugar metabolism; N-acetylneuraminate degradation; D-fructose 6-phosphate from N-acetylneuraminate: step 1/5. Functionally, catalyzes the reversible aldol cleavage of N-acetylneuraminic acid (sialic acid; Neu5Ac) to form pyruvate and N-acetylmannosamine (ManNAc) via a Schiff base intermediate. This chain is N-acetylneuraminate lyase, found in Clostridium perfringens (strain ATCC 13124 / DSM 756 / JCM 1290 / NCIMB 6125 / NCTC 8237 / Type A).